The following is a 238-amino-acid chain: Probable transcriptional regulatory protein TC_0742 (238 aa).

The segment at 1–21 is disordered; the sequence is MAGHSKWANTKHRKERADHKK. The span at 9-21 shows a compositional bias: basic residues; sequence NTKHRKERADHKK.

It belongs to the TACO1 family.

The protein localises to the cytoplasm. The sequence is that of Probable transcriptional regulatory protein TC_0742 from Chlamydia muridarum (strain MoPn / Nigg).